Here is a 490-residue protein sequence, read N- to C-terminus: Mitochondria-eating protein (490 aa).

Residues 112–210 (IRELSSVHES…RILRDEVSFL (99 aa)) are a coiled coil. Low complexity-rich tracts occupy residues 224 to 241 (SRSP…SPVR) and 456 to 490 (RSSS…SSRL). Disordered stretches follow at residues 224-253 (SRSP…LTSS) and 455-490 (SRSS…SSRL).

The protein belongs to the MIEAP family.

It is found in the cytoplasm. The protein localises to the mitochondrion outer membrane. Its subcellular location is the mitochondrion matrix. Its function is as follows. Key regulator of mitochondrial quality that mediates the repairing or degradation of unhealthy mitochondria in response to mitochondrial damage. Mediator of mitochondrial protein catabolic process (also named MALM) by mediating the degradation of damaged proteins inside mitochondria by promoting the accumulation in the mitochondrial matrix of hydrolases that are characteristic of the lysosomal lumen. Also involved in mitochondrion degradation of damaged mitochondria by promoting the formation of vacuole-like structures (named MIV), which engulf and degrade unhealthy mitochondria by accumulating lysosomes. Binds cardiolipin. May form molecular condensates (non-membrane-bounded organelles) within mitochondria that compartmentalize and promote cardiolipin metabolism. The chain is Mitochondria-eating protein (spata18) from Danio rerio (Zebrafish).